The sequence spans 958 residues: UPF0182 protein TW644 (958 aa).

7 helical membrane passes run 14 to 34, 59 to 79, 107 to 127, 166 to 186, 205 to 225, 249 to 269, and 280 to 300; these read IAILSVVAFLVLIALTAFFLV, IFVVFCLAFVFVSIFLWLCMF, KIVVLLVSLGLGAVAGIFAAS, LFFLLVTFVLGGILSILISVV, VQYAVLAAGIFVLLGLEFWLN, LIPGFAVLALVALGVALLFCI, and IIGVALAVVSALVVITALPWG.

This sequence belongs to the UPF0182 family.

It is found in the cell membrane. This Tropheryma whipplei (strain TW08/27) (Whipple's bacillus) protein is UPF0182 protein TW644.